We begin with the raw amino-acid sequence, 172 residues long: uncharacterized protein (172 aa).

The protein belongs to the baculoviridae 19 kDa protein family.

This is an uncharacterized protein from Orgyia pseudotsugata multicapsid polyhedrosis virus (OpMNPV).